Consider the following 239-residue polypeptide: MSDVALGVNIDHVATLRNARNVDYPDIVEVANIAVSNGADFITVHLREDRRHIKDDDVFRLKNSLKVPLNLEIAPTDEMLSIAIKVRPKCVCLVPEKRQELTTEGGLDVKRAFSYLISFIEKLHTYNIDVTLFIEPDVDQIDQAKKLSADNVELHTGKYCNNTTQSELSQVIKAAEYCYQRNIGCHAGHGLNYQSAAIIAKVPYISALNIGHFLICESVLHGIGTSVHKMKKAIASAPN.

Asparagine 9 serves as a coordination point for 3-amino-2-oxopropyl phosphate. 11–12 lines the 1-deoxy-D-xylulose 5-phosphate pocket; the sequence is DH. Residue arginine 20 coordinates 3-amino-2-oxopropyl phosphate. Histidine 45 functions as the Proton acceptor in the catalytic mechanism. 1-deoxy-D-xylulose 5-phosphate is bound by residues arginine 47 and histidine 52. Glutamate 72 acts as the Proton acceptor in catalysis. Threonine 102 is a 1-deoxy-D-xylulose 5-phosphate binding site. Histidine 189 (proton donor) is an active-site residue. 3-amino-2-oxopropyl phosphate contacts are provided by residues glycine 190 and 211-212; that span reads GH.

Belongs to the PNP synthase family. In terms of assembly, homooctamer; tetramer of dimers.

Its subcellular location is the cytoplasm. The catalysed reaction is 3-amino-2-oxopropyl phosphate + 1-deoxy-D-xylulose 5-phosphate = pyridoxine 5'-phosphate + phosphate + 2 H2O + H(+). It participates in cofactor biosynthesis; pyridoxine 5'-phosphate biosynthesis; pyridoxine 5'-phosphate from D-erythrose 4-phosphate: step 5/5. In terms of biological role, catalyzes the complicated ring closure reaction between the two acyclic compounds 1-deoxy-D-xylulose-5-phosphate (DXP) and 3-amino-2-oxopropyl phosphate (1-amino-acetone-3-phosphate or AAP) to form pyridoxine 5'-phosphate (PNP) and inorganic phosphate. This Ehrlichia chaffeensis (strain ATCC CRL-10679 / Arkansas) protein is Pyridoxine 5'-phosphate synthase.